The primary structure comprises 272 residues: Zinc finger protein 32 (272 aa).

Over residues 50–65 (RREKLEQKSPESKALQ) the composition is skewed to basic and acidic residues. The interval 50–69 (RREKLEQKSPESKALQEDSP) is disordered. 3 consecutive C2H2-type zinc fingers follow at residues 76–98 (YDCQ…ERIH), 104–126 (FECT…QRIH), and 132–154 (YQCK…ERLH). Cysteine 78, cysteine 81, histidine 94, histidine 98, cysteine 106, cysteine 109, histidine 122, histidine 126, serine 140, glutamine 143, glycine 156, tyrosine 160, phenylalanine 197, lysine 200, leucine 213, alanine 217, cysteine 246, cysteine 249, histidine 262, and cysteine 266 together coordinate Zn(2+). 2 consecutive C2H2-type zinc fingers follow at residues 160–182 (YECA…RRVH) and 188–210 (YRCD…IRVH). The segment at 216–238 (YACSHCRKSFHTRGNCLLHGKVH) adopts a C2H2-type 6 zinc-finger fold. A CCHC-type zinc finger spans residues 244–266 (YLCGQCGKSFTQRGSLAVHQRSC).

The protein belongs to the krueppel C2H2-type zinc-finger protein family.

The protein localises to the nucleus. Functionally, may be involved in transcriptional regulation. The polypeptide is Zinc finger protein 32 (Znf32) (Mus musculus (Mouse)).